The sequence spans 396 residues: Imidazolonepropionase (396 aa).

Positions 69 and 71 each coordinate Fe(3+). Zn(2+)-binding residues include histidine 69 and histidine 71. 4-imidazolone-5-propanoate contacts are provided by arginine 78, tyrosine 136, and histidine 163. Tyrosine 136 lines the N-formimidoyl-L-glutamate pocket. Residue histidine 224 participates in Fe(3+) binding. Histidine 224 lines the Zn(2+) pocket. Position 227 (glutamine 227) interacts with 4-imidazolone-5-propanoate. Fe(3+) is bound at residue aspartate 298. Aspartate 298 provides a ligand contact to Zn(2+). N-formimidoyl-L-glutamate is bound by residues asparagine 300 and glycine 302. Threonine 303 contributes to the 4-imidazolone-5-propanoate binding site.

Belongs to the metallo-dependent hydrolases superfamily. HutI family. Zn(2+) serves as cofactor. It depends on Fe(3+) as a cofactor.

The protein localises to the cytoplasm. The enzyme catalyses 4-imidazolone-5-propanoate + H2O = N-formimidoyl-L-glutamate. It functions in the pathway amino-acid degradation; L-histidine degradation into L-glutamate; N-formimidoyl-L-glutamate from L-histidine: step 3/3. Catalyzes the hydrolytic cleavage of the carbon-nitrogen bond in imidazolone-5-propanoate to yield N-formimidoyl-L-glutamate. It is the third step in the universal histidine degradation pathway. The polypeptide is Imidazolonepropionase (Cutibacterium acnes (strain DSM 16379 / KPA171202) (Propionibacterium acnes)).